The primary structure comprises 150 residues: D-aminoacyl-tRNA deacylase (150 aa).

The short motif at 138-139 is the Gly-cisPro motif, important for rejection of L-amino acids element; the sequence is GP.

Belongs to the DTD family. Homodimer.

The protein localises to the cytoplasm. It catalyses the reaction glycyl-tRNA(Ala) + H2O = tRNA(Ala) + glycine + H(+). It carries out the reaction a D-aminoacyl-tRNA + H2O = a tRNA + a D-alpha-amino acid + H(+). Functionally, an aminoacyl-tRNA editing enzyme that deacylates mischarged D-aminoacyl-tRNAs. Also deacylates mischarged glycyl-tRNA(Ala), protecting cells against glycine mischarging by AlaRS. Acts via tRNA-based rather than protein-based catalysis; rejects L-amino acids rather than detecting D-amino acids in the active site. By recycling D-aminoacyl-tRNA to D-amino acids and free tRNA molecules, this enzyme counteracts the toxicity associated with the formation of D-aminoacyl-tRNA entities in vivo and helps enforce protein L-homochirality. The polypeptide is D-aminoacyl-tRNA deacylase (Christiangramia forsetii (strain DSM 17595 / CGMCC 1.15422 / KT0803) (Gramella forsetii)).